Here is a 472-residue protein sequence, read N- to C-terminus: Eukaryotic translation initiation factor 2 subunit 3, X-linked (472 aa).

N-acetylalanine is present on Ala2. Ser16 bears the Phosphoserine mark. The 210-residue stretch at 39-248 folds into the tr-type G domain; sequence QATINIGTIG…IVKKIPVPPR (210 aa). Residues 48-55 form a G1 region; that stretch reads GHVAHGKS. Position 51–56 (51–56) interacts with GTP; it reads AHGKST. The interval 76–80 is G2; it reads NITIK. Residues 134–137 form a G3 region; the sequence is DCPG. Residues 190–193 and 225–227 contribute to the GTP site; these read NKID and SAQ. Positions 190–193 are G4; the sequence is NKID. The interval 225–227 is G5; it reads SAQ. Residues 457–469 form an interacts with Cdc123 region; the sequence is GQIRRGVTIKPTV.

It belongs to the TRAFAC class translation factor GTPase superfamily. Classic translation factor GTPase family. EIF2G subfamily. Eukaryotic translation initiation factor 2 eIF2 is a heterotrimeric complex composed of an alpha (EIF2S1), a beta (EIF2S2) and a gamma (EIF2S3) chain. eIF2 is member of the 43S pre-initiation complex (43S PIC). Interacts (via C-terminus) with CDC123; the interaction is direct. As to expression, widely expressed. In the brain, high mRNA levels are observed in specific regions, including the habenula, anterodorsal thalamic nucleus, hippocampus, hypothalamus, and cerebellum. Also expressed in the embryonic brain. There is a differential expression between males and females, which is tissue-specific. Females tend to have higher expression levels than males in the brain (cortex, hippocampus and paraventricular nucleus, but not in the habenula), as well as in other tissues. The up-regulation observed in females at the mRNA level may be due to the presence of 2 active copies of the gene.

The protein localises to the cytoplasm. Its subcellular location is the cytosol. It carries out the reaction GTP + H2O = GDP + phosphate + H(+). In terms of biological role, member of the eIF2 complex that functions in the early steps of protein synthesis by forming a ternary complex with GTP and initiator tRNA. This complex binds to a 40S ribosomal subunit, followed by mRNA binding to form the 43S pre-initiation complex (43S PIC). Junction of the 60S ribosomal subunit to form the 80S initiation complex is preceded by hydrolysis of the GTP bound to eIF2 and release of an eIF2-GDP binary complex. In order for eIF2 to recycle and catalyze another round of initiation, the GDP bound to eIF2 must exchange with GTP by way of a reaction catalyzed by eIF-2B. Along with its paralog on chromosome Y, may contribute to spermatogenesis up to the round spermatid stage. The chain is Eukaryotic translation initiation factor 2 subunit 3, X-linked (Eif2s3x) from Mus musculus (Mouse).